We begin with the raw amino-acid sequence, 509 residues long: T-complex protein 11-like protein 1 (509 aa).

Residues 1 to 12 (MSENLDKSHVDE) are compositionally biased toward basic and acidic residues. The interval 1–57 (MSENLDKSHVDEAGEAEAAASEQGLEGALECSDETLQKKVKSDSPSSQRVGRPHSSP) is disordered. Residues 16 to 30 (AEAAASEQGLEGALE) show a composition bias toward low complexity. A Phosphoserine modification is found at serine 56.

The protein belongs to the TCP11 family.

The polypeptide is T-complex protein 11-like protein 1 (Tcp11l1) (Mus musculus (Mouse)).